Here is a 250-residue protein sequence, read N- to C-terminus: Deoxynucleoside-5'-monophosphate kinase (250 aa).

Gly-14, Asp-16, and Thr-17 together coordinate ATP. Residues Val-44, Lys-65, Arg-130, Gly-137, Thr-138, Trp-150, Asp-170, Arg-172, Glu-176, and Ser-210 each contribute to the dGMP site.

This sequence belongs to the dNMP kinase family. Monomer.

The catalysed reaction is a 2'-deoxyribonucleoside 5'-phosphate + ATP = a 2'-deoxyribonucleoside 5'-diphosphate + ADP. Allows the synthesis of deoxyribonucleoside triphosphates necessary for the rapid viral DNA replication. Phosphorylates all four dNMPs. The enzyme had the highest activity with dAMP and had about 30% less activity with dTMP and dGMP, respectively. The lowest activity was observed with dCMP as the substrate (about 35% of that with dAMP). This is Deoxynucleoside-5'-monophosphate kinase from Escherichia coli (Enterobacteria phage T5).